Here is a 122-residue protein sequence, read N- to C-terminus: MIQPRSILEVADNSGAKRVQCIRVLGGSNRKYASLGDVIIVSVKEALPDSNIKKGSVAKAVIVRLRRSVRRNDGSYIRFDQNAVVLVNNQLEPIGTRIFGPVARELRWKEFTKIVSLAPEVI.

Belongs to the universal ribosomal protein uL14 family. Part of the 50S ribosomal subunit. Forms a cluster with proteins L3 and L19. In the 70S ribosome, L14 and L19 interact and together make contacts with the 16S rRNA in bridges B5 and B8.

Binds to 23S rRNA. Forms part of two intersubunit bridges in the 70S ribosome. The polypeptide is Large ribosomal subunit protein uL14 (Thermodesulfovibrio yellowstonii (strain ATCC 51303 / DSM 11347 / YP87)).